The sequence spans 59 residues: Large ribosomal subunit protein uL30 (59 aa).

Belongs to the universal ribosomal protein uL30 family. As to quaternary structure, part of the 50S ribosomal subunit.

This Sulfurihydrogenibium sp. (strain YO3AOP1) protein is Large ribosomal subunit protein uL30.